Here is a 477-residue protein sequence, read N- to C-terminus: Aspartyl/glutamyl-tRNA(Asn/Gln) amidotransferase subunit B (477 aa).

Belongs to the GatB/GatE family. GatB subfamily. Heterotrimer of A, B and C subunits.

It catalyses the reaction L-glutamyl-tRNA(Gln) + L-glutamine + ATP + H2O = L-glutaminyl-tRNA(Gln) + L-glutamate + ADP + phosphate + H(+). The catalysed reaction is L-aspartyl-tRNA(Asn) + L-glutamine + ATP + H2O = L-asparaginyl-tRNA(Asn) + L-glutamate + ADP + phosphate + 2 H(+). Functionally, allows the formation of correctly charged Asn-tRNA(Asn) or Gln-tRNA(Gln) through the transamidation of misacylated Asp-tRNA(Asn) or Glu-tRNA(Gln) in organisms which lack either or both of asparaginyl-tRNA or glutaminyl-tRNA synthetases. The reaction takes place in the presence of glutamine and ATP through an activated phospho-Asp-tRNA(Asn) or phospho-Glu-tRNA(Gln). The sequence is that of Aspartyl/glutamyl-tRNA(Asn/Gln) amidotransferase subunit B from Ligilactobacillus salivarius (strain UCC118) (Lactobacillus salivarius).